The primary structure comprises 442 residues: Ribosomal protein uS12 methylthiotransferase RimO (442 aa).

Residues 13 to 129 (RSIFLLSLGC…ILNILGTAYD (117 aa)) form the MTTase N-terminal domain. The [4Fe-4S] cluster site is built by C22, C58, C92, C153, C157, and C160. The region spanning 139-369 (LSPSHYAWLK…MELQEGISEK (231 aa)) is the Radical SAM core domain. A TRAM domain is found at 372-439 (RALEEKALKV…AYELVGRIKN (68 aa)).

It belongs to the methylthiotransferase family. RimO subfamily. It depends on [4Fe-4S] cluster as a cofactor.

It localises to the cytoplasm. The enzyme catalyses L-aspartate(89)-[ribosomal protein uS12]-hydrogen + (sulfur carrier)-SH + AH2 + 2 S-adenosyl-L-methionine = 3-methylsulfanyl-L-aspartate(89)-[ribosomal protein uS12]-hydrogen + (sulfur carrier)-H + 5'-deoxyadenosine + L-methionine + A + S-adenosyl-L-homocysteine + 2 H(+). Its function is as follows. Catalyzes the methylthiolation of an aspartic acid residue of ribosomal protein uS12. This is Ribosomal protein uS12 methylthiotransferase RimO from Chlorobium phaeobacteroides (strain BS1).